The chain runs to 443 residues: Probable glycine dehydrogenase (decarboxylating) subunit 1 (443 aa).

The protein belongs to the GcvP family. N-terminal subunit subfamily. As to quaternary structure, the glycine cleavage system is composed of four proteins: P, T, L and H. In this organism, the P 'protein' is a heterodimer of two subunits.

It catalyses the reaction N(6)-[(R)-lipoyl]-L-lysyl-[glycine-cleavage complex H protein] + glycine + H(+) = N(6)-[(R)-S(8)-aminomethyldihydrolipoyl]-L-lysyl-[glycine-cleavage complex H protein] + CO2. Functionally, the glycine cleavage system catalyzes the degradation of glycine. The P protein binds the alpha-amino group of glycine through its pyridoxal phosphate cofactor; CO(2) is released and the remaining methylamine moiety is then transferred to the lipoamide cofactor of the H protein. In Endomicrobium trichonymphae, this protein is Probable glycine dehydrogenase (decarboxylating) subunit 1.